A 338-amino-acid chain; its full sequence is Anthocyanidin reductase ((2S)-flavan-3-ol-forming) (338 aa).

NADP(+) contacts are provided by residues 18–21 (TGFV), Lys-48, 87–90 (VATP), and Tyr-168.

The protein belongs to the NAD(P)-dependent epimerase/dehydratase family. Dihydroflavonol-4-reductase subfamily. As to expression, expressed in leaves and grape berries.

It carries out the reaction a (2S,3R)-flavan-3-ol + 2 NADP(+) = an anthocyanidin with a 3-hydroxy group + 2 NADPH + 2 H(+). The catalysed reaction is a (2S,3S)-flavan-3-ol + 2 NADP(+) = an anthocyanidin with a 3-hydroxy group + 2 NADPH + 2 H(+). It participates in secondary metabolite biosynthesis; flavonoid biosynthesis. In terms of biological role, produces the terminal flavan-3-ol monomers required for the formation of proanthocyanidins or condensed tannins in leaves and flowers, as well as in the skin and seeds of developing berries. Behaves as a reductase and as a C-3 epimerase. Catalyzes the double reduction of anthocyanidins, producing a mixture of (2S,3S)- and (2S,3R)-flavan-3-ols. The enzyme catalyzes sequential hydride transfers to C-2 and C-4, respectively and epimerization at C-3 is achieved by tautomerization that occurs between the two hydride transfers. Converts cyanidin, pelargonidin and delphinidin into catechin and epicatechin, afzelechin and epiafzelechin, and gallocatechin and epigallocatechin respectively. The polypeptide is Anthocyanidin reductase ((2S)-flavan-3-ol-forming) (Vitis vinifera (Grape)).